A 371-amino-acid polypeptide reads, in one-letter code: D-alanine--D-alanine ligase (371 aa).

The ATP-grasp domain occupies 154–361 (KKLLVAEGLP…YPTLLAAMVD (208 aa)). 182-237 (RERLGLPVFVKPARGGSSIGVSRVSDWAELPAAIEAARRHDPKVIVEAGIAGRELE) contributes to the ATP binding site. The Mg(2+) site is built by D316, E328, and N330.

The protein belongs to the D-alanine--D-alanine ligase family. Requires Mg(2+) as cofactor. Mn(2+) serves as cofactor.

It localises to the cytoplasm. The enzyme catalyses 2 D-alanine + ATP = D-alanyl-D-alanine + ADP + phosphate + H(+). The protein operates within cell wall biogenesis; peptidoglycan biosynthesis. Functionally, cell wall formation. This is D-alanine--D-alanine ligase from Mycobacterium sp. (strain KMS).